Consider the following 113-residue polypeptide: Large ribosomal subunit protein P2 (113 aa).

Residues 66–113 (PVGGGGAVAAADAAPAAAAGGDKKEAKKEEKKEESESEDDDMGFALFE) form a disordered region. Positions 73 to 85 (VAAADAAPAAAAG) are enriched in low complexity. Residues 86 to 99 (GDKKEAKKEEKKEE) show a composition bias toward basic and acidic residues. Residues serine 100 and serine 102 each carry the phosphoserine modification.

Belongs to the eukaryotic ribosomal protein P1/P2 family. As to quaternary structure, P1 and P2 exist as dimers at the large ribosomal subunit.

Its function is as follows. Plays an important role in the elongation step of protein synthesis. The polypeptide is Large ribosomal subunit protein P2 (RpLP2) (Drosophila melanogaster (Fruit fly)).